The sequence spans 467 residues: ADAM DEC1 (467 aa).

An N-terminal signal peptide occupies residues 1–33; it reads MLPGTSRLPTEASMSWVLLSVLWLIIQIQVIDA. Residues 34–208 constitute a propeptide that is removed on maturation; that stretch reads TLTPELKPHE…LRTSRSLKNP (175 aa). Residues Asn61 and Asn236 are each glycosylated (N-linked (GlcNAc...) asparagine). The Peptidase M12B domain maps to 217–411; it reads KYIGLFLVLD…RNARCLLLAP (195 aa). 2 disulfides stabilise this stretch: Cys327–Cys406 and Cys368–Cys373. His351 contacts Zn(2+). Glu352 is a catalytic residue. The Zn(2+) site is built by His355 and Asp361. Residues 418–467 form the Disintegrin domain; the sequence is KPTCGNQVLDVGEECDCGSPEECTNLCCEPLTCRLKSQPDCSEASNHITE.

Requires Zn(2+) as cofactor. As to expression, expressed highly in uterus during pregnancy.

It is found in the secreted. May play an important role in the control of the immune response and during pregnancy. This is ADAM DEC1 (Adamdec1) from Mus musculus (Mouse).